We begin with the raw amino-acid sequence, 229 residues long: Adapter protein MecA (229 aa).

It belongs to the MecA family. In terms of assembly, homodimer.

Enables the recognition and targeting of unfolded and aggregated proteins to the ClpC protease or to other proteins involved in proteolysis. The protein is Adapter protein MecA of Latilactobacillus sakei subsp. sakei (strain 23K) (Lactobacillus sakei subsp. sakei).